Here is a 378-residue protein sequence, read N- to C-terminus: Glutamate 5-kinase (378 aa).

Lys14 is a binding site for ATP. The substrate site is built by Ser54, Asp141, and Asn153. 173–174 contributes to the ATP binding site; sequence SD. Positions 279–356 constitute a PUA domain; sequence AGRLTVDAGA…DEISAILGYD (78 aa).

Belongs to the glutamate 5-kinase family.

It localises to the cytoplasm. It carries out the reaction L-glutamate + ATP = L-glutamyl 5-phosphate + ADP. The protein operates within amino-acid biosynthesis; L-proline biosynthesis; L-glutamate 5-semialdehyde from L-glutamate: step 1/2. In terms of biological role, catalyzes the transfer of a phosphate group to glutamate to form L-glutamate 5-phosphate. The polypeptide is Glutamate 5-kinase (Brucella abortus (strain S19)).